Consider the following 347-residue polypeptide: 4-hydroxy-2-oxovalerate aldolase (347 aa).

The 251-residue stretch at 2–252 folds into the Pyruvate carboxyltransferase domain; it reads ILISDATLRD…DTRTTFERVM (251 aa). 10-11 is a substrate binding site; it reads RD. Asp-11 contributes to the Mn(2+) binding site. His-14 (proton acceptor) is an active-site residue. The substrate site is built by Ser-164 and His-191. Mn(2+)-binding residues include His-191 and His-193.

It belongs to the 4-hydroxy-2-oxovalerate aldolase family.

It catalyses the reaction (S)-4-hydroxy-2-oxopentanoate = acetaldehyde + pyruvate. The polypeptide is 4-hydroxy-2-oxovalerate aldolase (mhpE) (Burkholderia pseudomallei (strain K96243)).